Here is a 184-residue protein sequence, read N- to C-terminus: Outer-membrane lipoprotein carrier protein (184 aa).

Residues 1–19 (MRAFLKILMVLIFMSVAYA) form the signal peptide.

This sequence belongs to the LolA family. As to quaternary structure, monomer.

The protein resides in the periplasm. Participates in the translocation of lipoproteins from the inner membrane to the outer membrane. Only forms a complex with a lipoprotein if the residue after the N-terminal Cys is not an aspartate (The Asp acts as a targeting signal to indicate that the lipoprotein should stay in the inner membrane). The sequence is that of Outer-membrane lipoprotein carrier protein from Helicobacter pylori (strain HPAG1).